We begin with the raw amino-acid sequence, 240 residues long: MARRPRRSDSSSAEPTLSPQHLLALVRSTIPPIHPAGRPFIAAGLAVAGVGYRHRWARRTGLLAAGACAGFFRHPPRVPPSRAGAIVAPADGVICVIDTAAPPAELSMGDAPLPRVSIFLSVFDAHVQRAPVSGEVVAVQHRPGRFGSADLPAASDDNERNSVRIRTANGAEVVAVQVAGLVARRIVCDAHVGDKLAIGDTYGLIRFGSRLDTYLPPGTEPVVRVGQRTIAGETILADLP.

Serine 209 functions as the Schiff-base intermediate with substrate; via pyruvic acid in the catalytic mechanism. The residue at position 209 (serine 209) is a Pyruvic acid (Ser); by autocatalysis.

The protein belongs to the phosphatidylserine decarboxylase family. PSD-A subfamily. As to quaternary structure, heterodimer of a large membrane-associated beta subunit and a small pyruvoyl-containing alpha subunit. Pyruvate serves as cofactor. In terms of processing, is synthesized initially as an inactive proenzyme. Formation of the active enzyme involves a self-maturation process in which the active site pyruvoyl group is generated from an internal serine residue via an autocatalytic post-translational modification. Two non-identical subunits are generated from the proenzyme in this reaction, and the pyruvate is formed at the N-terminus of the alpha chain, which is derived from the carboxyl end of the proenzyme. The post-translation cleavage follows an unusual pathway, termed non-hydrolytic serinolysis, in which the side chain hydroxyl group of the serine supplies its oxygen atom to form the C-terminus of the beta chain, while the remainder of the serine residue undergoes an oxidative deamination to produce ammonia and the pyruvoyl prosthetic group on the alpha chain.

Its subcellular location is the cell membrane. It carries out the reaction a 1,2-diacyl-sn-glycero-3-phospho-L-serine + H(+) = a 1,2-diacyl-sn-glycero-3-phosphoethanolamine + CO2. Its pathway is phospholipid metabolism; phosphatidylethanolamine biosynthesis; phosphatidylethanolamine from CDP-diacylglycerol: step 2/2. Its function is as follows. Catalyzes the formation of phosphatidylethanolamine (PtdEtn) from phosphatidylserine (PtdSer). The chain is Phosphatidylserine decarboxylase proenzyme from Mycobacterium marinum (strain ATCC BAA-535 / M).